Consider the following 561-residue polypeptide: 2-succinyl-5-enolpyruvyl-6-hydroxy-3-cyclohexene-1-carboxylate synthase (561 aa).

The protein belongs to the TPP enzyme family. MenD subfamily. As to quaternary structure, homodimer. It depends on Mg(2+) as a cofactor. Requires Mn(2+) as cofactor. The cofactor is thiamine diphosphate.

It carries out the reaction isochorismate + 2-oxoglutarate + H(+) = 5-enolpyruvoyl-6-hydroxy-2-succinyl-cyclohex-3-ene-1-carboxylate + CO2. It participates in quinol/quinone metabolism; 1,4-dihydroxy-2-naphthoate biosynthesis; 1,4-dihydroxy-2-naphthoate from chorismate: step 2/7. The protein operates within cofactor biosynthesis; phylloquinone biosynthesis. In terms of biological role, catalyzes the thiamine diphosphate-dependent decarboxylation of 2-oxoglutarate and the subsequent addition of the resulting succinic semialdehyde-thiamine pyrophosphate anion to isochorismate to yield 2-succinyl-5-enolpyruvyl-6-hydroxy-3-cyclohexene-1-carboxylate (SEPHCHC). This is 2-succinyl-5-enolpyruvyl-6-hydroxy-3-cyclohexene-1-carboxylate synthase from Synechococcus sp. (strain CC9605).